Reading from the N-terminus, the 324-residue chain is MNALPSSPETAWLLLVVSLPTSASTARMRFWRGIKALGATALRDGAYLLPNLPGLRAPLQTLATDAASEDGKVWMLSVQAADDQQEAEYRALFDRSTEYAEWMVELSSARSTLSDSDEAELLRVARRHGRGIDAIRKVDFFPNEASARAELQWRDFNAAIDILLSPGEPHGVAGNIPRRDPTQYQGRQWATRQHLWVDRVACAWLIRRFIDPHATFLWLEDVRQCPDDALGFDFDGATFTHIGDRVSFEVLLASFGLDEDKGLARLGQMIHVLDVGGTPVAEASGFEAVLAGARERLPNDDALLDEVGYVLDSLYTHFSSPRKR.

Functionally, together with ChrA1, this protein reduces chromate accumulation and is essential for chromate resistance, possibly as a regulatory protein. The polypeptide is Protein ChrB (Cupriavidus metallidurans (strain ATCC 43123 / DSM 2839 / NBRC 102507 / CH34) (Ralstonia metallidurans)).